A 1788-amino-acid polypeptide reads, in one-letter code: U3 small nucleolar RNA-associated protein 10 (1788 aa).

One copy of the HEAT 1 repeat lies at 585–622; sequence LDFQAVVPYAIVALSDPAKKVRRAAAELVTVLGSFYET. Positions 884–905 are disordered; the sequence is PATKRRRVGSSEKSVDSQSPAD. HEAT repeat units follow at residues 926-962, 1049-1086, 1257-1294, 1301-1339, 1703-1740, and 1744-1781; these read AKHP…LVLS, QTVK…AYEH, LSIA…SESI, EALL…KYGK, EHHK…RLGE, and QSLP…TLGE.

This sequence belongs to the HEATR1/UTP10 family. Component of the ribosomal small subunit (SSU) processome.

The protein localises to the nucleus. Its subcellular location is the nucleolus. Involved in nucleolar processing of pre-18S ribosomal RNA. Involved in ribosome biosynthesis. The protein is U3 small nucleolar RNA-associated protein 10 (rbg-5) of Neurospora crassa (strain ATCC 24698 / 74-OR23-1A / CBS 708.71 / DSM 1257 / FGSC 987).